The following is a 174-amino-acid chain: Magnetosome protein MamT (174 aa).

Residues 1 to 9 (MGTPGGGRR) are Cytoplasmic-facing. A helical transmembrane segment spans residues 10–28 (WMTLISITLLMVVGLGLYW). Over 29–174 (DELSLSAGIS…EKKSGIKWLL (146 aa)) the chain is Lumenal. The MCR (magnetochrome) 1 motif lies at 87 to 107 (VMPGTGMPHPYVGDCIQCHLM). Residues C101, C104, H105, C152, C155, and H156 each contribute to the heme site. The MCR 2 motif lies at 138–158 (ILPTTRQPHPPAGRCIKCHDI).

Belongs to the magnetosome MamT family. Heme is required as a cofactor.

It localises to the magnetosome membrane. Its function is as follows. May play a role in magnetite crystal maturation. May transfer electrons to balance the Fe(2+)-Fe(3+) ratio during magnetite formation. This Magnetospirillum gryphiswaldense (strain DSM 6361 / JCM 21280 / NBRC 15271 / MSR-1) protein is Magnetosome protein MamT.